The primary structure comprises 358 residues: Histidinol-phosphate aminotransferase (358 aa).

N6-(pyridoxal phosphate)lysine is present on lysine 218.

This sequence belongs to the class-II pyridoxal-phosphate-dependent aminotransferase family. Histidinol-phosphate aminotransferase subfamily. In terms of assembly, homodimer. Pyridoxal 5'-phosphate is required as a cofactor.

The enzyme catalyses L-histidinol phosphate + 2-oxoglutarate = 3-(imidazol-4-yl)-2-oxopropyl phosphate + L-glutamate. Its pathway is amino-acid biosynthesis; L-histidine biosynthesis; L-histidine from 5-phospho-alpha-D-ribose 1-diphosphate: step 7/9. The chain is Histidinol-phosphate aminotransferase from Dehalococcoides mccartyi (strain CBDB1).